The primary structure comprises 383 residues: Processive diacylglycerol beta-glucosyltransferase (383 aa).

The protein belongs to the glycosyltransferase 28 family. UgtP subfamily.

The protein resides in the cell membrane. It carries out the reaction a 1,2-diacyl-3-O-(beta-D-glucopyranosyl)-sn-glycerol + UDP-alpha-D-glucose = a 1,2-diacyl-3-O-(beta-D-Glc-(1-&gt;6)-beta-D-Glc)-sn-glycerol + UDP + H(+). The catalysed reaction is a 1,2-diacyl-3-O-(beta-D-Glc-(1-&gt;6)-beta-D-Glc)-sn-glycerol + UDP-alpha-D-glucose = a 1,2-diacyl-3-O-(beta-D-Glc-(1-&gt;6)-beta-D-Glc-(1-&gt;6)-beta-D-Glc)-sn-glycerol + UDP + H(+). It catalyses the reaction a 1,2-diacyl-sn-glycerol + UDP-alpha-D-glucose = a 1,2-diacyl-3-O-(beta-D-glucopyranosyl)-sn-glycerol + UDP + H(+). It functions in the pathway glycolipid metabolism; diglucosyl-diacylglycerol biosynthesis. Its function is as follows. Processive glucosyltransferase involved in the biosynthesis of both the bilayer- and non-bilayer-forming membrane glucolipids. Is able to successively transfer up to three glucosyl residues to diacylglycerol (DAG), thereby catalyzing the formation of beta-monoglucosyl-DAG (3-O-(beta-D-glucopyranosyl)-1,2-diacyl-sn-glycerol), beta-diglucosyl-DAG (3-O-(beta-D-glucopyranosyl-beta-(1-&gt;6)-D-glucopyranosyl)-1,2-diacyl-sn-glycerol) and beta-triglucosyl-DAG (3-O-(beta-D-glucopyranosyl-beta-(1-&gt;6)-D-glucopyranosyl-beta-(1-&gt;6)-D-glucopyranosyl)-1,2-diacyl-sn-glycerol). Beta-diglucosyl-DAG is the predominant glycolipid found in Bacillales and is also used as a membrane anchor for lipoteichoic acid (LTA). The chain is Processive diacylglycerol beta-glucosyltransferase from Bacillus licheniformis (strain ATCC 14580 / DSM 13 / JCM 2505 / CCUG 7422 / NBRC 12200 / NCIMB 9375 / NCTC 10341 / NRRL NRS-1264 / Gibson 46).